An 889-amino-acid polypeptide reads, in one-letter code: Translation initiation factor IF-2 (889 aa).

Disordered stretches follow at residues 47–85 and 206–302; these read GHLKKQHGDESEAKPNKLTLNRKTKSTLTMGHGSKAKSV and AEAA…FTKP. Composition is skewed to basic and acidic residues over residues 52-61, 214-241, and 252-263; these read QHGDESEAKP, AAKKLAEENEGRWKEQEAERKAKEKEVV, and AEDKSDSADESG. Residues 389–558 form the tr-type G domain; it reads TRAPVVTIMG…LLQSEVLELT (170 aa). The tract at residues 398 to 405 is G1; that stretch reads GHVDHGKT. GTP is bound at residue 398-405; it reads GHVDHGKT. The segment at 423–427 is G2; it reads GITQH. The tract at residues 444–447 is G3; that stretch reads DTPG. GTP-binding positions include 444–448 and 498–501; these read DTPGH and NKMD. Residues 498-501 are G4; it reads NKMD. The interval 534–536 is G5; the sequence is SAK.

Belongs to the TRAFAC class translation factor GTPase superfamily. Classic translation factor GTPase family. IF-2 subfamily.

It is found in the cytoplasm. In terms of biological role, one of the essential components for the initiation of protein synthesis. Protects formylmethionyl-tRNA from spontaneous hydrolysis and promotes its binding to the 30S ribosomal subunits. Also involved in the hydrolysis of GTP during the formation of the 70S ribosomal complex. The chain is Translation initiation factor IF-2 from Colwellia psychrerythraea (strain 34H / ATCC BAA-681) (Vibrio psychroerythus).